The primary structure comprises 2032 residues: Cytoskeleton-associated protein 5 (2032 aa).

TOG regions lie at residues 1–223 (MGDD…KLPT) and 268–502 (YELL…LIHG). K48 carries the post-translational modification N6-acetyllysine. HEAT repeat units follow at residues 159–197 (IILL…WIRD), 356–394 (GQYA…TTTL), and 434–472 (KSLL…VVGE). The disordered stretch occupies residues 516 to 579 (PLPGRTAASG…GTKNKKGLET (64 aa)). The segment covering 543–554 (LKKAPAAKAGGP) has biased composition (low complexity). Positions 588–817 (SIEVCEEKAS…EFEKMQGQSP (230 aa)) are TOG 3. One copy of the HEAT 4 repeat lies at 750 to 788 (GLNVKAFISNVKTALAATNPAVRTAAITLLGVMYLYVGP). The disordered stretch occupies residues 811 to 851 (KMQGQSPPAPTRGISKHSTSGTDEGEDGDEPDDGSNDVVDL). A phosphoserine mark is found at S816 and S845. The segment covering 833-845 (DEGEDGDEPDDGS) has biased composition (acidic residues). TOG regions lie at residues 853–1081 (PRTE…VNMP) and 1193–1428 (IEQL…KRPS). 3 HEAT repeats span residues 855–893 (TEIS…DAKF), 936–974 (KQHV…QTGM), and 1013–1051 (PTDL…HLGY). Residues 1077–1160 (KVNMPAKPAP…KEDEDKSGPI (84 aa)) form a disordered region. HEAT repeat units follow at residues 1284–1322 (ENEA…VYPA), 1324–1357 (KMFP…SYGM), and 1361–1399 (QPTP…VHGD). The tract at residues 1422-1443 (RSAKRPSAAPIKQVEEKPQRAQ) is disordered. S1469 carries the phosphoserine modification. The interval 1801–1822 (SMDQTGSKSDKETEKGASRIDE) is disordered. Positions 1808-1822 (KSDKETEKGASRIDE) are enriched in basic and acidic residues. S1861 is subject to Phosphoserine. The interval 1932-1957 (PSVYLERLKILRQRCGLDNTKQDDRP) is interaction with TACC3. The disordered stretch occupies residues 1949–2032 (DNTKQDDRPP…RLERIKSSRK (84 aa)). Polar residues predominate over residues 1971 to 1983 (VASSTDMLHSKLS). A compositionally biased stretch (basic and acidic residues) spans 1984–1997 (QLRESREQHQHSDL). The segment covering 2002-2014 (THSSGTVTSSSST) has biased composition (low complexity). Residues 2018-2032 (DDLKKRLERIKSSRK) are compositionally biased toward basic and acidic residues.

This sequence belongs to the TOG/XMAP215 family. As to quaternary structure, interacts with TACC1. Interacts with SLAIN2 and SLAIN1. Interacts with HNRNPA2B1. Interacts with TACC3 independently of clathrin. Interacts with TACC3 and clathrin forming the TACC3/ch-TOG/clathrin complex located at spindle inter-microtubules bridges. Interacts with NDC80; indicative for an association with the NDC80 complex. In terms of tissue distribution, overexpressed in hepatomas and colonic tumors. Also expressed in skeletal muscle, brain, heart, placenta, lung, liver, kidney and pancreas. Expression is elevated in the brain; highly expressed in the Purkinje cell bodies of the cerebellum.

The protein resides in the cytoplasm. The protein localises to the cytoskeleton. Its subcellular location is the microtubule organizing center. It is found in the centrosome. It localises to the spindle pole. The protein resides in the spindle. The protein localises to the chromosome. Its subcellular location is the centromere. It is found in the kinetochore. Functionally, binds to the plus end of microtubules and regulates microtubule dynamics and microtubule organization. Acts as a processive microtubule polymerase. Promotes cytoplasmic microtubule nucleation and elongation. Plays a major role in organizing spindle poles. In spindle formation protects kinetochore microtubules from depolymerization by KIF2C and has an essential role in centrosomal microtubule assembly independently of KIF2C activity. Contributes to centrosome integrity. Acts as a component of the TACC3/ch-TOG/clathrin complex proposed to contribute to stabilization of kinetochore fibers of the mitotic spindle by acting as inter-microtubule bridge. The TACC3/ch-TOG/clathrin complex is required for the maintenance of kinetochore fiber tension. Enhances the strength of NDC80 complex-mediated kinetochore-tip microtubule attachments. In Homo sapiens (Human), this protein is Cytoskeleton-associated protein 5 (CKAP5).